Consider the following 243-residue polypeptide: MTPTPELHGVWQARIITLFPQAFPGVLGESLTGKALQDGLWQLHTTDLRRFGVGKHRNVDDTPAGGGAGMVLRPDVLGAAIEATMQGTSSNWPLIYLSPRGRPMDQALMQSLARCDGVTLLCGRFEGVDERVLEHYGIQEVSLGDFVMTGGEIAAQALIDATVRLLPGVLGNQASTEEESFSSGLLEHPQYTRPAEWMGRPIPEVLMSGHHGKVAEWRRAQSEEITRRRRPDLWQRHQATKDD.

Residues Gly123 and 143 to 148 (LGDFVM) contribute to the S-adenosyl-L-methionine site.

This sequence belongs to the RNA methyltransferase TrmD family. As to quaternary structure, homodimer.

The protein resides in the cytoplasm. The catalysed reaction is guanosine(37) in tRNA + S-adenosyl-L-methionine = N(1)-methylguanosine(37) in tRNA + S-adenosyl-L-homocysteine + H(+). In terms of biological role, specifically methylates guanosine-37 in various tRNAs. The sequence is that of tRNA (guanine-N(1)-)-methyltransferase from Ruegeria pomeroyi (strain ATCC 700808 / DSM 15171 / DSS-3) (Silicibacter pomeroyi).